Reading from the N-terminus, the 299-residue chain is Non-homologous end joining protein Ku (299 aa).

Positions 10 to 188 constitute a Ku domain; the sequence is ISFGLVHIPV…TEAVTDARLT (179 aa). Disordered stretches follow at residues 227–249 and 261–299; these read AGEGKIEDVETDPGEEERKSADV and AGKSSASKTRKPAAKDKVADKQSPKPKRPAVRKKTGKAS. Basic and acidic residues predominate over residues 273 to 283; the sequence is AAKDKVADKQS. Basic residues predominate over residues 284 to 299; it reads PKPKRPAVRKKTGKAS.

Belongs to the prokaryotic Ku family. As to quaternary structure, homodimer. Interacts with LigD.

Its function is as follows. With LigD forms a non-homologous end joining (NHEJ) DNA repair enzyme, which repairs dsDNA breaks with reduced fidelity. Binds linear dsDNA with 5'- and 3'- overhangs but not closed circular dsDNA nor ssDNA. Recruits and stimulates the ligase activity of LigD. The polypeptide is Non-homologous end joining protein Ku (Pseudomonas syringae pv. tomato (strain ATCC BAA-871 / DC3000)).